We begin with the raw amino-acid sequence, 1249 residues long: DNA-directed RNA polymerase subunit beta (1249 aa).

Belongs to the RNA polymerase beta chain family. In terms of assembly, the RNAP catalytic core consists of 2 alpha, 1 beta, 1 beta' and 1 omega subunit. When a sigma factor is associated with the core the holoenzyme is formed, which can initiate transcription.

It catalyses the reaction RNA(n) + a ribonucleoside 5'-triphosphate = RNA(n+1) + diphosphate. DNA-dependent RNA polymerase catalyzes the transcription of DNA into RNA using the four ribonucleoside triphosphates as substrates. The sequence is that of DNA-directed RNA polymerase subunit beta from Clostridium botulinum (strain Eklund 17B / Type B).